The primary structure comprises 120 residues: Large ribosomal subunit protein uL18 (120 aa).

The protein belongs to the universal ribosomal protein uL18 family. In terms of assembly, part of the 50S ribosomal subunit; part of the 5S rRNA/L5/L18/L25 subcomplex. Contacts the 5S and 23S rRNAs.

In terms of biological role, this is one of the proteins that bind and probably mediate the attachment of the 5S RNA into the large ribosomal subunit, where it forms part of the central protuberance. This Brucella abortus (strain S19) protein is Large ribosomal subunit protein uL18.